A 213-amino-acid chain; its full sequence is ATP phosphoribosyltransferase (213 aa).

It belongs to the ATP phosphoribosyltransferase family. Short subfamily. Heteromultimer composed of HisG and HisZ subunits.

It is found in the cytoplasm. The catalysed reaction is 1-(5-phospho-beta-D-ribosyl)-ATP + diphosphate = 5-phospho-alpha-D-ribose 1-diphosphate + ATP. It participates in amino-acid biosynthesis; L-histidine biosynthesis; L-histidine from 5-phospho-alpha-D-ribose 1-diphosphate: step 1/9. Catalyzes the condensation of ATP and 5-phosphoribose 1-diphosphate to form N'-(5'-phosphoribosyl)-ATP (PR-ATP). Has a crucial role in the pathway because the rate of histidine biosynthesis seems to be controlled primarily by regulation of HisG enzymatic activity. In Listeria welshimeri serovar 6b (strain ATCC 35897 / DSM 20650 / CCUG 15529 / CIP 8149 / NCTC 11857 / SLCC 5334 / V8), this protein is ATP phosphoribosyltransferase.